A 308-amino-acid polypeptide reads, in one-letter code: Electron transfer flavoprotein subunit alpha (308 aa).

Residue 252-280 (LYVAVGISGAIQHLAGMKDSKVIVAINKD) coordinates FAD.

The protein belongs to the ETF alpha-subunit/FixB family. As to quaternary structure, heterodimer of an alpha and a beta subunit. FAD is required as a cofactor.

Functionally, the electron transfer flavoprotein serves as a specific electron acceptor for other dehydrogenases. It transfers the electrons to the main respiratory chain via ETF-ubiquinone oxidoreductase (ETF dehydrogenase). The chain is Electron transfer flavoprotein subunit alpha (etfA) from Paracoccus denitrificans.